Reading from the N-terminus, the 199-residue chain is Potassium-transporting ATPase KdpC subunit (199 aa).

Residues 7 to 27 (PAIVLLLALTLLTGLAYPLAM) traverse the membrane as a helical segment. The interval 67-86 (HGRPSATTAADPQDSSKTVP) is disordered. The segment covering 71–84 (SATTAADPQDSSKT) has biased composition (polar residues).

Belongs to the KdpC family. In terms of assembly, the system is composed of three essential subunits: KdpA, KdpB and KdpC.

It is found in the cell inner membrane. In terms of biological role, part of the high-affinity ATP-driven potassium transport (or Kdp) system, which catalyzes the hydrolysis of ATP coupled with the electrogenic transport of potassium into the cytoplasm. This subunit acts as a catalytic chaperone that increases the ATP-binding affinity of the ATP-hydrolyzing subunit KdpB by the formation of a transient KdpB/KdpC/ATP ternary complex. The protein is Potassium-transporting ATPase KdpC subunit of Rhodopseudomonas palustris (strain BisB18).